Reading from the N-terminus, the 456-residue chain is Bifunctional protein GlmU (456 aa).

The pyrophosphorylase stretch occupies residues 1–229 (MLNNAMSVVI…LSEVEGVNNR (229 aa)). Residues 11 to 14 (LAAG), lysine 25, glutamine 76, 81 to 82 (GT), 103 to 105 (YGD), glycine 140, glutamate 154, asparagine 169, and asparagine 227 each bind UDP-N-acetyl-alpha-D-glucosamine. A Mg(2+)-binding site is contributed by aspartate 105. Residue asparagine 227 participates in Mg(2+) binding. The interval 230 to 250 (LQLSRLERVYQSEQAEKLLLA) is linker. Residues 251 to 456 (GVMLRDPARF…EGWRRPVKKK (206 aa)) form an N-acetyltransferase region. UDP-N-acetyl-alpha-D-glucosamine is bound by residues arginine 333 and lysine 351. Histidine 363 (proton acceptor) is an active-site residue. Tyrosine 366 and asparagine 377 together coordinate UDP-N-acetyl-alpha-D-glucosamine. Acetyl-CoA-binding positions include alanine 380, 386–387 (NY), serine 405, alanine 423, and arginine 440.

The protein in the N-terminal section; belongs to the N-acetylglucosamine-1-phosphate uridyltransferase family. In the C-terminal section; belongs to the transferase hexapeptide repeat family. In terms of assembly, homotrimer. The cofactor is Mg(2+).

The protein localises to the cytoplasm. It carries out the reaction alpha-D-glucosamine 1-phosphate + acetyl-CoA = N-acetyl-alpha-D-glucosamine 1-phosphate + CoA + H(+). The catalysed reaction is N-acetyl-alpha-D-glucosamine 1-phosphate + UTP + H(+) = UDP-N-acetyl-alpha-D-glucosamine + diphosphate. It functions in the pathway nucleotide-sugar biosynthesis; UDP-N-acetyl-alpha-D-glucosamine biosynthesis; N-acetyl-alpha-D-glucosamine 1-phosphate from alpha-D-glucosamine 6-phosphate (route II): step 2/2. It participates in nucleotide-sugar biosynthesis; UDP-N-acetyl-alpha-D-glucosamine biosynthesis; UDP-N-acetyl-alpha-D-glucosamine from N-acetyl-alpha-D-glucosamine 1-phosphate: step 1/1. The protein operates within bacterial outer membrane biogenesis; LPS lipid A biosynthesis. Its function is as follows. Catalyzes the last two sequential reactions in the de novo biosynthetic pathway for UDP-N-acetylglucosamine (UDP-GlcNAc). The C-terminal domain catalyzes the transfer of acetyl group from acetyl coenzyme A to glucosamine-1-phosphate (GlcN-1-P) to produce N-acetylglucosamine-1-phosphate (GlcNAc-1-P), which is converted into UDP-GlcNAc by the transfer of uridine 5-monophosphate (from uridine 5-triphosphate), a reaction catalyzed by the N-terminal domain. The protein is Bifunctional protein GlmU of Shigella boydii serotype 18 (strain CDC 3083-94 / BS512).